Reading from the N-terminus, the 168-residue chain is RNA pyrophosphohydrolase (168 aa).

Positions 8–160 constitute a Nudix hydrolase domain; sequence PYRPCVGLAI…KRQVYERVAR (153 aa). The Nudix box motif lies at 47–68; sequence GGIDKGEEPYEAALRELYEETS.

The protein belongs to the Nudix hydrolase family. RppH subfamily. The cofactor is a divalent metal cation.

Functionally, accelerates the degradation of transcripts by removing pyrophosphate from the 5'-end of triphosphorylated RNA, leading to a more labile monophosphorylated state that can stimulate subsequent ribonuclease cleavage. The sequence is that of RNA pyrophosphohydrolase from Azorhizobium caulinodans (strain ATCC 43989 / DSM 5975 / JCM 20966 / LMG 6465 / NBRC 14845 / NCIMB 13405 / ORS 571).